The chain runs to 286 residues: Bifunctional protein FolD (286 aa).

Residues Gly166–Ser168 and Ser191 each bind NADP(+).

This sequence belongs to the tetrahydrofolate dehydrogenase/cyclohydrolase family. Homodimer.

It carries out the reaction (6R)-5,10-methylene-5,6,7,8-tetrahydrofolate + NADP(+) = (6R)-5,10-methenyltetrahydrofolate + NADPH. The catalysed reaction is (6R)-5,10-methenyltetrahydrofolate + H2O = (6R)-10-formyltetrahydrofolate + H(+). It functions in the pathway one-carbon metabolism; tetrahydrofolate interconversion. In terms of biological role, catalyzes the oxidation of 5,10-methylenetetrahydrofolate to 5,10-methenyltetrahydrofolate and then the hydrolysis of 5,10-methenyltetrahydrofolate to 10-formyltetrahydrofolate. This is Bifunctional protein FolD from Lactiplantibacillus plantarum (strain ATCC BAA-793 / NCIMB 8826 / WCFS1) (Lactobacillus plantarum).